The chain runs to 116 residues: Protein Rev (116 aa).

Phosphoserine; by host CK2 occurs at positions 5 and 8. The homomultimerization stretch occupies residues Leu-18–Asn-26. A disordered region spans residues Asn-26–Asn-50. Residues Ser-34 to Asn-50 carry the Nuclear localization signal and RNA-binding (RRE) motif. Residues Gln-36 to Ala-47 are compositionally biased toward basic residues. A Nuclear export signal and binding to XPO1 motif is present at residues Leu-73–Asp-84. Residues Asn-91–Glu-116 form a disordered region. Position 92 is a phosphoserine; by host (Ser-92).

The protein belongs to the HIV-1 REV protein family. Homomultimer; when bound to the RRE. Multimeric assembly is essential for activity and may involve XPO1. Binds to human KPNB1, XPO1, TNPO1, RANBP5 and IPO7. Interacts with the viral Integrase. Interacts with human KHDRBS1. Interacts with human NAP1; this interaction decreases Rev multimerization and stimulates its activity. Interacts with human DEAD-box helicases DDX3 and DDX24; these interactions may serve for viral RNA export to the cytoplasm and packaging, respectively. Interacts with human PSIP1; this interaction may inhibit HIV-1 DNA integration by promoting dissociation of the Integrase-LEDGF/p75 complex. Asymmetrically arginine dimethylated at one site by host PRMT6. Methylation impairs the RNA-binding activity and export of viral RNA from the nucleus to the cytoplasm. In terms of processing, phosphorylated by protein kinase CK2. Presence of, and maybe binding to the N-terminus of the regulatory beta subunit of CK2 is necessary for CK2-mediated Rev's phosphorylation.

The protein resides in the host nucleus. It is found in the host nucleolus. Its subcellular location is the host cytoplasm. In terms of biological role, escorts unspliced or incompletely spliced viral pre-mRNAs (late transcripts) out of the nucleus of infected cells. These pre-mRNAs carry a recognition sequence called Rev responsive element (RRE) located in the env gene, that is not present in fully spliced viral mRNAs (early transcripts). This function is essential since most viral proteins are translated from unspliced or partially spliced pre-mRNAs which cannot exit the nucleus by the pathway used by fully processed cellular mRNAs. Rev itself is translated from a fully spliced mRNA that readily exits the nucleus. Rev's nuclear localization signal (NLS) binds directly to KPNB1/Importin beta-1 without previous binding to KPNA1/Importin alpha-1. KPNB1 binds to the GDP bound form of RAN (Ran-GDP) and targets Rev to the nucleus. In the nucleus, the conversion from Ran-GDP to Ran-GTP dissociates Rev from KPNB1 and allows Rev's binding to the RRE in viral pre-mRNAs. Rev multimerization on the RRE via cooperative assembly exposes its nuclear export signal (NES) to the surface. Rev can then form a complex with XPO1/CRM1 and Ran-GTP, leading to nuclear export of the complex. Conversion from Ran-GTP to Ran-GDP mediates dissociation of the Rev/RRE/XPO1/RAN complex, so that Rev can return to the nucleus for a subsequent round of export. Beside KPNB1, also seems to interact with TNPO1/Transportin-1, RANBP5/IPO5 and IPO7/RANBP7 for nuclear import. The nucleoporin-like HRB/RIP is an essential cofactor that probably indirectly interacts with Rev to release HIV RNAs from the perinuclear region to the cytoplasm. This Homo sapiens (Human) protein is Protein Rev.